A 1451-amino-acid polypeptide reads, in one-letter code: Protein clueless (1451 aa).

Disordered stretches follow at residues 1–101 (MALE…EYAA) and 264–286 (KKTR…VSEP). Residues 9–53 (NSNATATGDATATKASSKAKENNNTAGGKKNLNPIPSQQNSNQNL) show a composition bias toward low complexity. A compositionally biased stretch (basic residues) spans 66-75 (GKKKGKKNRN). Residue Ser-270 is modified to Phosphoserine. The Clu domain occupies 424-666 (RAEDAFSSKL…RTFPPDVNFL (243 aa)). Disordered regions lie at residues 722–775 (AKKQ…ESKT), 961–1012 (AVSS…SSVS), and 1413–1451 (ANNN…ATSS). Over residues 748–758 (GADKTDVKEEK) the composition is skewed to basic and acidic residues. Residues 969–984 (KKRGNGGKHNKHKSSK) show a composition bias toward basic residues. Residues 989–1010 (QQQQQTTGNQNGSSSGTSNGSS) are compositionally biased toward low complexity.

It belongs to the CLU family.

The protein localises to the cytoplasm. MRNA-binding protein involved in proper cytoplasmic distribution of mitochondria. This is Protein clueless from Drosophila yakuba (Fruit fly).